Reading from the N-terminus, the 537-residue chain is Chaperonin GroEL (537 aa).

ATP-binding positions include 30–33 (TLGP), 87–91 (DGTTT), glycine 414, 477–479 (DAV), and aspartate 493.

The protein belongs to the chaperonin (HSP60) family. As to quaternary structure, forms a cylinder of 14 subunits composed of two heptameric rings stacked back-to-back. Interacts with the co-chaperonin GroES.

The protein localises to the cytoplasm. The catalysed reaction is ATP + H2O + a folded polypeptide = ADP + phosphate + an unfolded polypeptide.. Together with its co-chaperonin GroES, plays an essential role in assisting protein folding. The GroEL-GroES system forms a nano-cage that allows encapsulation of the non-native substrate proteins and provides a physical environment optimized to promote and accelerate protein folding. The protein is Chaperonin GroEL of Coprothermobacter proteolyticus (strain ATCC 35245 / DSM 5265 / OCM 4 / BT).